We begin with the raw amino-acid sequence, 92 residues long: Small ribosomal subunit protein uS19c (92 aa).

It belongs to the universal ribosomal protein uS19 family.

The protein resides in the plastid. Its subcellular location is the chloroplast. Its function is as follows. Protein S19 forms a complex with S13 that binds strongly to the 16S ribosomal RNA. The polypeptide is Small ribosomal subunit protein uS19c (Tupiella akineta (Green alga)).